The primary structure comprises 446 residues: Bifunctional protein GlmU (446 aa).

Positions 1–225 are pyrophosphorylase; sequence MEGIILAAGK…ETEVYGVNDR (225 aa). UDP-N-acetyl-alpha-D-glucosamine contacts are provided by residues 6 to 9, K20, Q70, and 75 to 76; these read LAAG and GT. A Mg(2+)-binding site is contributed by D98. UDP-N-acetyl-alpha-D-glucosamine contacts are provided by G135, E150, N165, and N223. N223 is a binding site for Mg(2+). The tract at residues 226–246 is linker; the sequence is VQLARLTKGVYRRKAEALMQE. The segment at 247–446 is N-acetyltransferase; it reads GVTIIDPETV…RQVNKEDYVK (200 aa). UDP-N-acetyl-alpha-D-glucosamine is bound by residues R328 and K346. The active-site Proton acceptor is the H358. 2 residues coordinate UDP-N-acetyl-alpha-D-glucosamine: Y361 and N372. Acetyl-CoA-binding positions include A375, 381–382, S400, A418, and R435; that span reads NY.

In the N-terminal section; belongs to the N-acetylglucosamine-1-phosphate uridyltransferase family. The protein in the C-terminal section; belongs to the transferase hexapeptide repeat family. In terms of assembly, homotrimer. The cofactor is Mg(2+).

It is found in the cytoplasm. The enzyme catalyses alpha-D-glucosamine 1-phosphate + acetyl-CoA = N-acetyl-alpha-D-glucosamine 1-phosphate + CoA + H(+). It catalyses the reaction N-acetyl-alpha-D-glucosamine 1-phosphate + UTP + H(+) = UDP-N-acetyl-alpha-D-glucosamine + diphosphate. It participates in nucleotide-sugar biosynthesis; UDP-N-acetyl-alpha-D-glucosamine biosynthesis; N-acetyl-alpha-D-glucosamine 1-phosphate from alpha-D-glucosamine 6-phosphate (route II): step 2/2. The protein operates within nucleotide-sugar biosynthesis; UDP-N-acetyl-alpha-D-glucosamine biosynthesis; UDP-N-acetyl-alpha-D-glucosamine from N-acetyl-alpha-D-glucosamine 1-phosphate: step 1/1. It functions in the pathway bacterial outer membrane biogenesis; LPS lipid A biosynthesis. Functionally, catalyzes the last two sequential reactions in the de novo biosynthetic pathway for UDP-N-acetylglucosamine (UDP-GlcNAc). The C-terminal domain catalyzes the transfer of acetyl group from acetyl coenzyme A to glucosamine-1-phosphate (GlcN-1-P) to produce N-acetylglucosamine-1-phosphate (GlcNAc-1-P), which is converted into UDP-GlcNAc by the transfer of uridine 5-monophosphate (from uridine 5-triphosphate), a reaction catalyzed by the N-terminal domain. The sequence is that of Bifunctional protein GlmU from Carboxydothermus hydrogenoformans (strain ATCC BAA-161 / DSM 6008 / Z-2901).